Reading from the N-terminus, the 158-residue chain is Small ribosomal subunit protein bS6 (158 aa).

The segment at 98 to 158 (EAPSAPLARR…DRDEDQNEEN (61 aa)) is disordered. Composition is skewed to basic and acidic residues over residues 106-117 (RRGEDRDRDRGF) and 127-150 (DSGRRRGADDREEYRARDEYRSDR).

This sequence belongs to the bacterial ribosomal protein bS6 family.

Its function is as follows. Binds together with bS18 to 16S ribosomal RNA. In Acidiphilium cryptum (strain JF-5), this protein is Small ribosomal subunit protein bS6.